A 533-amino-acid polypeptide reads, in one-letter code: Cytochrome P450 9e2 (533 aa).

Heme is bound at residue C475.

The protein belongs to the cytochrome P450 family. Heme serves as cofactor.

The protein localises to the endoplasmic reticulum membrane. It is found in the microsome membrane. This is Cytochrome P450 9e2 (CYP9E2) from Blattella germanica (German cockroach).